The chain runs to 201 residues: Small ribosomal subunit protein uS4 (201 aa).

The S4 RNA-binding domain maps to 93–156 (RRLDNMVYRL…KNLDIIKNAV (64 aa)).

The protein belongs to the universal ribosomal protein uS4 family. As to quaternary structure, part of the 30S ribosomal subunit. Contacts protein S5. The interaction surface between S4 and S5 is involved in control of translational fidelity.

Functionally, one of the primary rRNA binding proteins, it binds directly to 16S rRNA where it nucleates assembly of the body of the 30S subunit. In terms of biological role, with S5 and S12 plays an important role in translational accuracy. This chain is Small ribosomal subunit protein uS4, found in Limosilactobacillus reuteri subsp. reuteri (strain JCM 1112) (Lactobacillus reuteri).